Here is a 363-residue protein sequence, read N- to C-terminus: Class I histocompatibility antigen, Gogo-B*0201 alpha chain (363 aa).

Positions Met-1–Ala-24 are cleaved as a signal peptide. An alpha-1 region spans residues Gly-25–Asp-114. Topologically, residues Gly-25–Ile-308 are extracellular. Residue Asn-110 is glycosylated (N-linked (GlcNAc...) asparagine). The segment at Gly-115–Ala-206 is alpha-2. 2 disulfide bridges follow: Cys-125–Cys-188 and Cys-227–Cys-283. The segment at Asp-207 to Trp-298 is alpha-3. One can recognise an Ig-like C1-type domain in the interval Pro-209–Arg-297. Positions Glu-299 to Ile-308 are connecting peptide. The helical transmembrane segment at Val-309–Cys-333 threads the bilayer. Residues Arg-334–Ala-363 lie on the Cytoplasmic side of the membrane. The segment at Lys-336–Ala-363 is disordered. Residues Ser-344 to Ala-363 are compositionally biased toward low complexity.

Belongs to the MHC class I family. As to quaternary structure, heterodimer of an alpha chain and a beta chain (beta-2-microglobulin).

It localises to the membrane. In terms of biological role, involved in the presentation of foreign antigens to the immune system. The sequence is that of Class I histocompatibility antigen, Gogo-B*0201 alpha chain from Gorilla gorilla gorilla (Western lowland gorilla).